A 413-amino-acid polypeptide reads, in one-letter code: MTSNHLPHHNLTDEDQQEYNKIFKEFIFNIPHNMNPFSPQLDEKKNSHIVEYHWRSPSNTIPSTCNTLYVCFNSPIPVNVIPNNVIILCFLCENKTGFTKGPDFNHPIHPGTIPMSVRYIYFINATYNKPLIAHALPPSAEYLFLSDCYNQAFRAGDLPPNLNILETGDEYNQPFDPLVIPKSLRSLFLGKGYNQPLEFGGLTSLTCLVYDEGSISELPIISLPPNLEFLLLSDAFNHPIEAGMLPPKLKTLTFGDGFNQPLAVGTLPPSLENINFGKVFDQPFLPNVLPHHLKSISFHQFSYFSQTFENIPSHVQTVEFGYTYNKPITSLPSHLKYIKFSEKYNHPIDGVLPQSLTHCYLGKSFKRPLVPGIFPPGLKVLILNGYPKKIPPGTVPANCNFQKNPKQGACSVM.

FNIP repeat units lie at residues 104-148 (FNHP…LSDC), 149-192 (YNQA…LGKG), 222-257 (SLPP…FGDG), 258-301 (FNQP…FHQF), 304-343 (FSQT…FSEK), and 344-386 (YNHP…LNGY).

As to quaternary structure, interacts with calmodulin in the presence of Ca(2+).

The protein is Calmodulin-binding protein CmbB of Dictyostelium discoideum (Social amoeba).